The following is a 465-amino-acid chain: Chromosomal replication initiator protein DnaA (465 aa).

Residues 1–72 are domain I, interacts with DnaA modulators; it reads MRTKQLWQVA…ETLSLLLGRP (72 aa). Residues 72 to 117 are domain II; that stretch reads PIAVHFTVHGQDDEEHPVQRRPQRRALASEEGSASKQLSLTPSPEH. A disordered region spans residues 80-118; it reads HGQDDEEHPVQRRPQRRALASEEGSASKQLSLTPSPEHG. The span at 103 to 113 shows a compositional bias: polar residues; the sequence is GSASKQLSLTP. The interval 118 to 334 is domain III, AAA+ region; that stretch reads GLNPRYTFEK…GALNRIVALA (217 aa). ATP-binding residues include G162, G164, K165, and T166. Positions 335–465 are domain IV, binds dsDNA; it reads QLTHQPITLA…DAKAPLASRH (131 aa).

The protein belongs to the DnaA family. As to quaternary structure, oligomerizes as a right-handed, spiral filament on DNA at oriC.

The protein localises to the cytoplasm. Plays an essential role in the initiation and regulation of chromosomal replication. ATP-DnaA binds to the origin of replication (oriC) to initiate formation of the DNA replication initiation complex once per cell cycle. Binds the DnaA box (a 9 base pair repeat at the origin) and separates the double-stranded (ds)DNA. Forms a right-handed helical filament on oriC DNA; dsDNA binds to the exterior of the filament while single-stranded (ss)DNA is stabiized in the filament's interior. The ATP-DnaA-oriC complex binds and stabilizes one strand of the AT-rich DNA unwinding element (DUE), permitting loading of DNA polymerase. After initiation quickly degrades to an ADP-DnaA complex that is not apt for DNA replication. Binds acidic phospholipids. This Thermomicrobium roseum (strain ATCC 27502 / DSM 5159 / P-2) protein is Chromosomal replication initiator protein DnaA.